The following is an 867-amino-acid chain: Zinc finger protein zfp-1 (867 aa).

A PHD-type 1 zinc finger spans residues 5–57 (VGGCCVCADENGWTDNPLIYCDGENCEVAVHQGCYGIQEVPEGEWFCAKCTKA). The C2HC pre-PHD-type 2 zinc finger occupies 69-102 (TFCCQLCPFDYGALKKTDRNGWAHVICALYIPEV). The interval 69–186 (TFCCQLCPFD…KYCGYCENHL (118 aa)) is extended PHD2 domain (ePHD2). A PHD-type 2 zinc finger spans residues 125-186 (KLCYICNEER…KYCGYCENHL (62 aa)). 4 disordered regions span residues 267-311 (GSTV…SLSS), 440-477 (KNDMMDKTHKRPRANARPPAVLGSMSSGSSGGTVGKSP), 503-586 (ADRT…QSNR), and 753-773 (SSGAPVNSNIQNHRATPSTAG). The span at 285–311 (PLTTSSRSSVAQDPSPPLTINKNSLSS) shows a compositional bias: polar residues. The span at 503–512 (ADRTAAERRA) shows a compositional bias: basic and acidic residues. Residues 516 to 527 (QSQPSTSTNGGP) are compositionally biased toward polar residues. Residues 538–550 (HTNSTNSTNHQNN) are compositionally biased toward low complexity. Residues 551 to 573 (GLTQNAPASTSMQAGTSSNDGVI) are compositionally biased toward polar residues. A compositionally biased stretch (low complexity) spans 574-585 (SQNGTSSTSQSN). The span at 758–771 (VNSNIQNHRATPST) shows a compositional bias: polar residues.

Multimer; in vitro. Interacts (via C-terminus) with dot-1.1 to form a heterodimer known as the zfp-1-dot-1.1 complex or DotCom complex. As to expression, isoform a: Expressed at high levels in maturing oocytes, but at low levels in the rest of the germ line (at protein level). Isoform a: Not expressed in the pharynx, germ line and tail. Isoform c: Not expressed in the germ line (at protein level). Isoform c: Uniformly expressed.

The protein resides in the nucleus. It localises to the chromosome. Recruits the histone methyltransferase dot-1.1 to chromatin to methylate 'Lys-79' of histone H3 and activate transcription. Recognizes and binds histone H3 methylated at 'Lys-4' (H3K4me) at the promoters of target genes. During stress, the zfp-1-dot-1.1 complex also plays a role in the deubiquitination of histone H2B sites, which negatively modulates the RNA polymerase II-induced transcription of highly expressed genes. In response to stress, binds to the pdk-1 promoter to negatively regulate pdk-1 expression, which negatively modulates daf-16/FOXO-mediated gene expression. Thus, most likely via this mechanism, in response to stress, it confers a protective role against neuronal necrosis. Plays a role in Insulin/IGF-1-like signaling (IIS)- and diet restriction-mediated lifespan extension by controlling daf-16/FOXO and pha-4/FOXA recruitment to target promoters. May negatively regulate the expression of genes required for vulval development. May play a role in axon guidance in D-type motor neurons. May suppress sensitivity to RNAi. Functionally, required for migration of HSN motor neurons during embryogenesis. This chain is Zinc finger protein zfp-1, found in Caenorhabditis elegans.